The primary structure comprises 244 residues: 1-(5-phosphoribosyl)-5-[(5-phosphoribosylamino)methylideneamino] imidazole-4-carboxamide isomerase (244 aa).

Asp-12 (proton acceptor) is an active-site residue. The active-site Proton donor is Asp-131.

It belongs to the HisA/HisF family.

It is found in the cytoplasm. It carries out the reaction 1-(5-phospho-beta-D-ribosyl)-5-[(5-phospho-beta-D-ribosylamino)methylideneamino]imidazole-4-carboxamide = 5-[(5-phospho-1-deoxy-D-ribulos-1-ylimino)methylamino]-1-(5-phospho-beta-D-ribosyl)imidazole-4-carboxamide. Its pathway is amino-acid biosynthesis; L-histidine biosynthesis; L-histidine from 5-phospho-alpha-D-ribose 1-diphosphate: step 4/9. This Nocardioides sp. (strain ATCC BAA-499 / JS614) protein is 1-(5-phosphoribosyl)-5-[(5-phosphoribosylamino)methylideneamino] imidazole-4-carboxamide isomerase.